Here is a 132-residue protein sequence, read N- to C-terminus: Small ribosomal subunit protein uS8 (132 aa).

This sequence belongs to the universal ribosomal protein uS8 family. In terms of assembly, part of the 30S ribosomal subunit. Contacts proteins S5 and S12.

Functionally, one of the primary rRNA binding proteins, it binds directly to 16S rRNA central domain where it helps coordinate assembly of the platform of the 30S subunit. The sequence is that of Small ribosomal subunit protein uS8 from Borrelia garinii subsp. bavariensis (strain ATCC BAA-2496 / DSM 23469 / PBi) (Borreliella bavariensis).